Here is a 401-residue protein sequence, read N- to C-terminus: Putative hetero-Diels-Alderase asR5 (401 aa).

The first 21 residues, 1 to 21 (MRRSFLISAALGLSMSTPALA), serve as a signal peptide directing secretion. N-linked (GlcNAc...) asparagine glycans are attached at residues Asn-71, Asn-77, Asn-240, and Asn-334.

It belongs to the eupF Diels-Alderase family.

Its pathway is secondary metabolite biosynthesis; terpenoid biosynthesis. Putative hetero-Diels-Alderase; part of the gene cluster that mediates the biosynthesis of xenovulene A, an unusual meroterpenoid that has potent inhibitory effects on the human gamma-aminobutyrate A (GABAA) benzodiazepine receptor. The first step of xenovulene A biosynthesis is the biosynthesis of 3-methylorcinaldehyde performed by the non-reducing polyketide synthase aspks1. The salicylate hydroxylase asL1 then catalyzes the oxidative dearomatization of 3-methylorcinaldehyde to yield a dearomatized hydroxycyclohexadione. The 2-oxoglutarate-dependent dioxygenase asL3 further catalyzes the oxidative ring expansion to provide the first tropolone metabolite. The cytochrome P450 monooxygenase asR2 allows the synthesis of tropolone hemiacetal. In parallel, a previously unrecognised class of terpene cyclase, asR6, produces alpha-humulene from farnesylpyrophosphate (FPP). The putative Diels-Alderase asR5 probably catalyzes the formation of the tropolone-humulene skeleton by linking humulene and the polyketide moiety. Oxidative-ring contractions catalyzed by asL4 and asL6 then processively remove carbon atoms from the polyketide to yield xenovulene A. In Sarocladium schorii (Acremonium strictum (strain IMI 501407)), this protein is Putative hetero-Diels-Alderase asR5.